Here is a 237-residue protein sequence, read N- to C-terminus: Probable 2-phosphosulfolactate phosphatase (237 aa).

This sequence belongs to the ComB family. Mg(2+) serves as cofactor.

It carries out the reaction (2R)-O-phospho-3-sulfolactate + H2O = (2R)-3-sulfolactate + phosphate. This chain is Probable 2-phosphosulfolactate phosphatase, found in Thermus thermophilus (strain ATCC 27634 / DSM 579 / HB8).